A 264-amino-acid polypeptide reads, in one-letter code: Phosphonoacetaldehyde hydrolase (264 aa).

Residue D9 is the Nucleophile of the active site. Mg(2+) is bound by residues D9 and A11. The active-site Schiff-base intermediate with substrate is the K50. D183 contributes to the Mg(2+) binding site.

This sequence belongs to the HAD-like hydrolase superfamily. PhnX family. In terms of assembly, homodimer. Mg(2+) serves as cofactor.

It carries out the reaction phosphonoacetaldehyde + H2O = acetaldehyde + phosphate + H(+). Functionally, involved in phosphonate degradation. The sequence is that of Phosphonoacetaldehyde hydrolase from Bacillus cereus (strain B4264).